Here is a 909-residue protein sequence, read N- to C-terminus: Tubulin polyglutamylase TTLL7 (909 aa).

Residues 40–392 enclose the TTL domain; that stretch reads NGAITANVVG…RASDKKKNLA (353 aa). ATP-binding positions include Lys-162, 168-169, 190-193, and 203-205; these read MG, QEYL, and KFD. Arg-229 lines the L-glutamate pocket. Position 251-252 (251-252) interacts with ATP; it reads TN. L-glutamate is bound by residues Tyr-253, Ser-254, and Lys-273. 3 residues coordinate Mg(2+): Asp-338, Glu-351, and Asn-353. Position 369 (Lys-369) interacts with L-glutamate. Residues 390-452 are c-MTBD region; that stretch reads NLAKQKAEAQ…ISREEYENRH (63 aa). Disordered stretches follow at residues 517 to 580 and 603 to 688; these read DEKL…KVSY and KAAR…PSIS. The segment covering 518 to 531 has biased composition (basic and acidic residues); it reads EKLSGKPTRPKEPR. A compositionally biased stretch (polar residues) spans 532-542; the sequence is TLSSMPESTQT. Residues 548–562 are compositionally biased toward low complexity; it reads NYSSHSSSNSTGSSS. Over residues 571 to 580 the composition is skewed to basic and acidic residues; that stretch reads KEGKEKKVSY. The span at 604 to 625 shows a compositional bias: low complexity; that stretch reads AARPFSNSSSPSSAASMRRSVS. The span at 626–657 shows a compositional bias: polar residues; sequence CPRSITALNTQSPTTDQRPFSSRISSTITRPL. Positions 658–673 are enriched in low complexity; sequence SGNRTNSLNRSSSSNR. A compositionally biased stretch (polar residues) spans 674 to 688; sequence VPQSGTSGSVYPSIS.

It belongs to the tubulin--tyrosine ligase family. As to quaternary structure, interacts with both alpha- and beta-tubulin (via C-terminal tubulin tails). Requires Mg(2+) as cofactor.

The protein localises to the cell projection. Its subcellular location is the cilium. It localises to the cytoplasm. The protein resides in the cytoskeleton. It is found in the cilium basal body. The protein localises to the dendrite. Its subcellular location is the perikaryon. The catalysed reaction is L-glutamyl-[protein] + L-glutamate + ATP = gamma-L-glutamyl-L-glutamyl-[protein] + ADP + phosphate + H(+). It carries out the reaction (L-glutamyl)(n)-gamma-L-glutamyl-L-glutamyl-[protein] + L-glutamate + ATP = (L-glutamyl)(n+1)-gamma-L-glutamyl-L-glutamyl-[protein] + ADP + phosphate + H(+). Its function is as follows. Polyglutamylase which modifies tubulin, generating polyglutamate side chains of variable lengths on the gamma-carboxyl group of specific glutamate residues within the C-terminal tail of tubulin. Mediates both ATP-dependent initiation and elongation steps of the polyglutamylation reaction. Preferentially modifies the beta-tubulin tail over an alpha-tail. Competes with monoglycylase TTLL3 for modification site on beta-tubulin substrate, thereby creating an anticorrelation between glycylation and glutamylation reactions. This Xenopus tropicalis (Western clawed frog) protein is Tubulin polyglutamylase TTLL7.